Reading from the N-terminus, the 75-residue chain is uncharacterized protein (75 aa).

Residues 7-26 (ATAPLFVIVGLAVVLTGATG) traverse the membrane as a helical segment.

Its subcellular location is the membrane. This is an uncharacterized protein from Dictyostelium discoideum (Social amoeba).